The sequence spans 528 residues: DNA primase large subunit (528 aa).

Residues 210–239 (NEEHQRKQYFQQEKFIKLPFENVIELVGNR) are H-T-H-like motif. [4Fe-4S] cluster is bound by residues C336, C417, C434, and C474.

Belongs to the eukaryotic-type primase large subunit family. In terms of assembly, DNA polymerase alpha:primase is a four subunit enzyme complex, which is assembled throughout the cell cycle, and consists of the two DNA polymerase subunits A POL1 and B POL12, and the DNA primase large PRI2 and small PRI1 subunits. Interacts with MCM10. [4Fe-4S] cluster is required as a cofactor.

Functionally, DNA primase is the polymerase that synthesizes small RNA primers for the Okazaki fragments made during discontinuous DNA replication. In a complex with DNA polymerase alpha (DNA polymerase alpha:primase) constitutes a replicative polymerase. Both primase components participate in formation of the active center, but the ATP-binding site is exclusively located on p48. This chain is DNA primase large subunit (PRI2), found in Saccharomyces cerevisiae (strain ATCC 204508 / S288c) (Baker's yeast).